We begin with the raw amino-acid sequence, 176 residues long: Lipoprotein signal peptidase (176 aa).

4 consecutive transmembrane segments (helical) span residues 26–46, 60–80, 82–102, and 107–127; these read LWMA…IVIV, FFNL…ADAG, WQRW…VWLL, and GQKL…GNVV. Active-site residues include Asp137 and Asp155. Residues 147-167 traverse the membrane as a helical segment; sequence HWPAFNVADCAITVGAVLLIV.

The protein belongs to the peptidase A8 family.

The protein localises to the cell inner membrane. It carries out the reaction Release of signal peptides from bacterial membrane prolipoproteins. Hydrolyzes -Xaa-Yaa-Zaa-|-(S,diacylglyceryl)Cys-, in which Xaa is hydrophobic (preferably Leu), and Yaa (Ala or Ser) and Zaa (Gly or Ala) have small, neutral side chains.. It functions in the pathway protein modification; lipoprotein biosynthesis (signal peptide cleavage). Its function is as follows. This protein specifically catalyzes the removal of signal peptides from prolipoproteins. In Cupriavidus pinatubonensis (strain JMP 134 / LMG 1197) (Cupriavidus necator (strain JMP 134)), this protein is Lipoprotein signal peptidase.